Here is an 803-residue protein sequence, read N- to C-terminus: Translation initiation factor IF-2 (803 aa).

Disordered regions lie at residues 95-125 (PVVEQKRETEPAPTQEVPLTSDTTNLNEKAE) and 138-209 (EVKE…KLEQ). Residues 111–121 (VPLTSDTTNLN) are compositionally biased toward polar residues. Basic and acidic residues predominate over residues 138-155 (EVKEEAKKTPSEKKETPK). Positions 156 to 167 (KGPRKETRRSRK) are enriched in basic residues. Positions 168–188 (PDKEDKWEREELHMTKLVEER) are enriched in basic and acidic residues. The region spanning 302–471 (PRAPVVTIMG…LLQAEVLELK (170 aa)) is the tr-type G domain. Positions 311 to 318 (GHVDHGKT) are G1. Residue 311-318 (GHVDHGKT) participates in GTP binding. Positions 336–340 (GITQH) are G2. The segment at 357-360 (DTPG) is G3. GTP-binding positions include 357 to 361 (DTPGH) and 411 to 414 (NKID). Residues 411-414 (NKID) form a G4 region. Positions 447–449 (SAK) are G5.

Belongs to the TRAFAC class translation factor GTPase superfamily. Classic translation factor GTPase family. IF-2 subfamily.

It is found in the cytoplasm. In terms of biological role, one of the essential components for the initiation of protein synthesis. Protects formylmethionyl-tRNA from spontaneous hydrolysis and promotes its binding to the 30S ribosomal subunits. Also involved in the hydrolysis of GTP during the formation of the 70S ribosomal complex. This is Translation initiation factor IF-2 from Coxiella burnetii (strain CbuG_Q212) (Coxiella burnetii (strain Q212)).